The chain runs to 122 residues: Large ribosomal subunit protein uL14 (122 aa).

This sequence belongs to the universal ribosomal protein uL14 family. In terms of assembly, part of the 50S ribosomal subunit. Forms a cluster with proteins L3 and L19. In the 70S ribosome, L14 and L19 interact and together make contacts with the 16S rRNA in bridges B5 and B8.

Functionally, binds to 23S rRNA. Forms part of two intersubunit bridges in the 70S ribosome. This Streptomyces griseus subsp. griseus (strain JCM 4626 / CBS 651.72 / NBRC 13350 / KCC S-0626 / ISP 5235) protein is Large ribosomal subunit protein uL14.